Consider the following 712-residue polypeptide: Polyribonucleotide nucleotidyltransferase (712 aa).

Mg(2+) is bound by residues aspartate 487 and aspartate 493. One can recognise a KH domain in the interval 554–613 (PRIEVMNIPVDKIREVIGSGGKVIREIVEKTGAKINIEDDGTVKIASSSGKEIEAARKWI). One can recognise an S1 motif domain in the interval 623-691 (GQVYEGTVVK…ERGKVRLSMK (69 aa)).

It belongs to the polyribonucleotide nucleotidyltransferase family. Requires Mg(2+) as cofactor.

The protein localises to the cytoplasm. The enzyme catalyses RNA(n+1) + phosphate = RNA(n) + a ribonucleoside 5'-diphosphate. Involved in mRNA degradation. Catalyzes the phosphorolysis of single-stranded polyribonucleotides processively in the 3'- to 5'-direction. The protein is Polyribonucleotide nucleotidyltransferase of Rhizobium johnstonii (strain DSM 114642 / LMG 32736 / 3841) (Rhizobium leguminosarum bv. viciae).